The chain runs to 329 residues: Serine dehydratase-like (329 aa).

Methionine 1 is subject to N-acetylmethionine. Lysine 48 bears the N6-(pyridoxal phosphate)lysine mark.

It belongs to the serine/threonine dehydratase family. As to quaternary structure, monomer. Homodimer. Requires pyridoxal 5'-phosphate as cofactor. In terms of tissue distribution, abundantly expressed in liver.

It carries out the reaction L-serine = pyruvate + NH4(+). The catalysed reaction is L-threonine = 2-oxobutanoate + NH4(+). It catalyses the reaction L-glutamate = D-glutamate. Catalyzes the pyridoxal-phosphate-dependent dehydrative deamination of L-threonine and L-serine to ammonia and alpha-ketobutyrate and pyruvate, respectively. Also exhibits racemase activity towards L-glutamate and D-glutamate. The chain is Serine dehydratase-like (Sdsl) from Mus musculus (Mouse).